The primary structure comprises 245 residues: Derlin-1 (245 aa).

The Cytoplasmic segment spans residues 1 to 5; the sequence is MDLEN. Residues 6–26 form a helical membrane-spanning segment; sequence FLLGIPIVTRYWFLASTIIPL. At 27 to 57 the chain is on the lumenal side; sequence LGRFGFINVQWMFLQWDLVVNKFQFWRPLTA. A helical transmembrane segment spans residues 58–78; the sequence is LIYYPVTPQTGFHWLMMCYFL. Over 79–100 the chain is Cytoplasmic; sequence YNYSKALESETYRGRSADYLFM. The helical transmembrane segment at 101-121 threads the bilayer; the sequence is LIFNWFFCSGLCMALDIYFLL. Over 122–166 the chain is Lumenal; it reads EPMVISVLYVWCQVNKDTIVSFWFGMRFPARYLPWVLWGFNAVLR. A helical transmembrane segment spans residues 167 to 187; sequence GGGTNELVGILVGHAYFFVAL. At 188–245 the chain is on the cytoplasmic side; it reads KYPDEYGVDLISTPEFLHRLIPDEDGGIHGQDGNIRGARQQPRGHQWPGGVGARLGGN. The segment at 218 to 245 is disordered; that stretch reads QDGNIRGARQQPRGHQWPGGVGARLGGN. Gly residues predominate over residues 234 to 245; it reads WPGGVGARLGGN.

Belongs to the derlin family.

Its subcellular location is the endoplasmic reticulum membrane. Specifically required for the degradation process of misfolded endoplasmic reticulum (ER) luminal proteins. Participates in the transfer of misfolded proteins from the ER to the cytosol, where they are destroyed by the proteasome in a ubiquitin-dependent manner. This Caenorhabditis elegans protein is Derlin-1.